The chain runs to 117 residues: Immunoglobulin heavy variable 3-5 (117 aa).

The first 18 residues, 1 to 18 (MKMFTLLYLLTVVPGILS), serve as a signal peptide directing secretion. Residues 19–117 (DVQLQESGPG…EDTATYYCAR (99 aa)) enclose the Ig-like domain. Cysteines 40 and 115 form a disulfide.

The protein is Immunoglobulin heavy variable 3-5 of Mus musculus (Mouse).